We begin with the raw amino-acid sequence, 292 residues long: Small ribosomal subunit protein uS2 (292 aa).

A disordered region spans residues Thr-265–Trp-292. The span at Ala-277–Trp-292 shows a compositional bias: low complexity.

This sequence belongs to the universal ribosomal protein uS2 family. Component of the small ribosomal subunit. Mature ribosomes consist of a small (40S) and a large (60S) subunit. The 40S subunit contains about 33 different proteins and 1 molecule of RNA (18S). The 60S subunit contains about 49 different proteins and 3 molecules of RNA (25S, 5.8S and 5S). Interacts with RPS21.

Its subcellular location is the cytoplasm. Required for the assembly and/or stability of the 40S ribosomal subunit. Required for the processing of the 20S rRNA-precursor to mature 18S rRNA in a late step of the maturation of 40S ribosomal subunits. This chain is Small ribosomal subunit protein uS2, found in Cryptococcus neoformans var. neoformans serotype D (strain B-3501A) (Filobasidiella neoformans).